Consider the following 161-residue polypeptide: Allophycocyanin beta chain (161 aa).

An N4-methylasparagine modification is found at N71. C81 contacts (2R,3E)-phycocyanobilin.

It belongs to the phycobiliprotein family. As to quaternary structure, heterodimer of an alpha and a beta chain. Contains one covalently linked phycocyanobilin chromophore.

It is found in the plastid. The protein resides in the cyanelle thylakoid membrane. Its function is as follows. Light-harvesting photosynthetic bile pigment-protein from the phycobiliprotein complex. Allophycocyanin has a maximum absorption at approximately 650 nanometers. The sequence is that of Allophycocyanin beta chain (apcB) from Cyanophora paradoxa.